A 515-amino-acid polypeptide reads, in one-letter code: 2-isopropylmalate synthase (515 aa).

The 263-residue stretch at 5 to 267 folds into the Pyruvate carboxyltransferase domain; it reads VIIFDTTLRD…DTRINTQEIH (263 aa). D14, H202, H204, and N238 together coordinate Mn(2+). Positions 392-515 are regulatory domain; that stretch reads VLDKLSAHST…VADIKSHKHH (124 aa).

The protein belongs to the alpha-IPM synthase/homocitrate synthase family. LeuA type 1 subfamily. As to quaternary structure, homodimer. Requires Mn(2+) as cofactor.

The protein localises to the cytoplasm. It catalyses the reaction 3-methyl-2-oxobutanoate + acetyl-CoA + H2O = (2S)-2-isopropylmalate + CoA + H(+). Its pathway is amino-acid biosynthesis; L-leucine biosynthesis; L-leucine from 3-methyl-2-oxobutanoate: step 1/4. Catalyzes the condensation of the acetyl group of acetyl-CoA with 3-methyl-2-oxobutanoate (2-ketoisovalerate) to form 3-carboxy-3-hydroxy-4-methylpentanoate (2-isopropylmalate). This Haemophilus influenzae (strain 86-028NP) protein is 2-isopropylmalate synthase.